Here is a 143-residue protein sequence, read N- to C-terminus: NADH-quinone oxidoreductase subunit A (143 aa).

The next 3 membrane-spanning stretches (helical) occupy residues phenylalanine 8–threonine 28, phenylalanine 63–tryptophan 83, and phenylalanine 93–tryptophan 113.

This sequence belongs to the complex I subunit 3 family. In terms of assembly, NDH-1 is composed of 14 different subunits. Subunits NuoA, H, J, K, L, M, N constitute the membrane sector of the complex.

It is found in the cell inner membrane. It catalyses the reaction a quinone + NADH + 5 H(+)(in) = a quinol + NAD(+) + 4 H(+)(out). NDH-1 shuttles electrons from NADH, via FMN and iron-sulfur (Fe-S) centers, to quinones in the respiratory chain. The immediate electron acceptor for the enzyme in this species is believed to be a menaquinone. Couples the redox reaction to proton translocation (for every two electrons transferred, four hydrogen ions are translocated across the cytoplasmic membrane), and thus conserves the redox energy in a proton gradient. The protein is NADH-quinone oxidoreductase subunit A of Pelodictyon phaeoclathratiforme (strain DSM 5477 / BU-1).